The following is a 211-amino-acid chain: Probable oligoribonuclease (211 aa).

The Exonuclease domain occupies 38-202 (IVWMDLEMTG…DDIRESIKEL (165 aa)). Residue Tyr-159 is part of the active site.

Belongs to the oligoribonuclease family.

In terms of biological role, 3'-to-5' exoribonuclease specific for small oligoribonucleotides. The chain is Probable oligoribonuclease from Drosophila melanogaster (Fruit fly).